Consider the following 373-residue polypeptide: Probable pectin lyase C (373 aa).

The signal sequence occupies residues 1-18; it reads MKVPFLQLLCLNAALASA. Disulfide bonds link Cys-81/Cys-100 and Cys-90/Cys-220. N-linked (GlcNAc...) asparagine glycosylation occurs at Asn-123. Arg-250 is an active-site residue. A disulfide bond links Cys-316 and Cys-324.

The protein belongs to the polysaccharide lyase 1 family.

It localises to the secreted. The enzyme catalyses Eliminative cleavage of (1-&gt;4)-alpha-D-galacturonan methyl ester to give oligosaccharides with 4-deoxy-6-O-methyl-alpha-D-galact-4-enuronosyl groups at their non-reducing ends.. In terms of biological role, pectinolytic enzymes consist of four classes of enzymes: pectin lyase, polygalacturonase, pectin methylesterase and rhamnogalacturonase. Among pectinolytic enzymes, pectin lyase is the most important in depolymerization of pectin, since it cleaves internal glycosidic bonds of highly methylated pectins. This is Probable pectin lyase C (pelC) from Aspergillus niger (strain ATCC MYA-4892 / CBS 513.88 / FGSC A1513).